A 354-amino-acid polypeptide reads, in one-letter code: NADPH dehydrogenase (354 aa).

The FMN site is built by Ser-23, Pro-24, Cys-26, Ala-58, and Gln-100. The active-site Proton donor is Tyr-182. The FMN site is built by Arg-230, Leu-301, Gly-323, and Arg-324.

The protein belongs to the NADH:flavin oxidoreductase/NADH oxidase family. NamA subfamily. Homodimer. Behaves as an active monomer in solution while in the crystal packing assembles following the classical dimeric architecture of other thermophilic-like ene-reductases. It depends on FMN as a cofactor.

The catalysed reaction is A + NADPH + H(+) = AH2 + NADP(+). In terms of biological role, ene-reductase that catalyzes the stereoselective reduction of activated C-C double bonds. Shows very good activity with 4-ketoisophorone, 2-cyclohexen-1-one and 1-octen-3-one, and low activity with maleimide, 2-methyl-pentenal, 2-methyl-cyclohexen-1-one, 2-cyclopenten-1-one and trans-2-hexen-1-al. Shows the highest catalytic efficiency with ketoisophorone. Exhibits a restricted substrate spectrum with generally lower activities compared to other ene-reductases. The protein is NADPH dehydrogenase of Chloroflexus aggregans (strain MD-66 / DSM 9485).